The sequence spans 267 residues: Probable ribose-5-phosphate isomerase 1 (267 aa).

Residue Gly-2 is modified to N-acetylglycine. Ser-92 is modified (phosphoserine).

Belongs to the ribose 5-phosphate isomerase family. In terms of tissue distribution, expressed in roots, cotyledons, leaves and flowers.

Its subcellular location is the cytoplasm. The enzyme catalyses aldehydo-D-ribose 5-phosphate = D-ribulose 5-phosphate. The protein operates within carbohydrate degradation; pentose phosphate pathway; D-ribose 5-phosphate from D-ribulose 5-phosphate (non-oxidative stage): step 1/1. In terms of biological role, catalyzes the reversible conversion of ribose-5-phosphate to ribulose 5-phosphate. The chain is Probable ribose-5-phosphate isomerase 1 (RPI1) from Arabidopsis thaliana (Mouse-ear cress).